The sequence spans 1124 residues: PAN2-PAN3 deadenylation complex catalytic subunit PAN2 (1124 aa).

WD repeat units follow at residues 19-58 (IDNSKITSLQFDNQQNLLWCGDSKGTTRSFTPQSTSIPMP), 118-157 (PGFNNLSCMTFNSNTNNDLVIAGDSLFKVDLLKPNMTTSF), 158-195 (NHTGKVSMIDNTLNYLTLGKSNGEIEIFDPVSNQTVKS), and 309-348 (SSNTYLANLEVSGNGEFITFSDGFQNLHLWSFKNNNSKNF). The segment at 351–484 (FPSYLEQPDF…EYKLSNKFEV (134 aa)) is linker. Positions 484–861 (VPNCYSNLKI…KPIIVMYQLA (378 aa)) constitute a USP domain. The Exonuclease domain maps to 917 to 1091 (IAIDAEFVAL…EDANTALLLY (175 aa)). Positions 920, 922, 1030, and 1083 each coordinate a divalent metal cation.

This sequence belongs to the peptidase C19 family. PAN2 subfamily. In terms of assembly, forms a heterotrimer with an asymmetric homodimer of the regulatory subunit PAN3 to form the poly(A)-nuclease (PAN) deadenylation complex. A divalent metal cation is required as a cofactor.

It localises to the cytoplasm. The enzyme catalyses Exonucleolytic cleavage of poly(A) to 5'-AMP.. Positively regulated by the regulatory subunit PAN3. Functionally, catalytic subunit of the poly(A)-nuclease (PAN) deadenylation complex, one of two cytoplasmic mRNA deadenylases involved in mRNA turnover. PAN specifically shortens poly(A) tails of RNA and the activity is stimulated by poly(A)-binding protein PAB1. PAN deadenylation is followed by rapid degradation of the shortened mRNA tails by the CCR4-NOT complex. Deadenylated mRNAs are then degraded by two alternative mechanisms, namely exosome-mediated 3'-5' exonucleolytic degradation, or deadenylation-dependent mRNA decaping and subsequent 5'-3' exonucleolytic degradation by XRN1. May also be involved in post-transcriptional maturation of mRNA poly(A) tails. The protein is PAN2-PAN3 deadenylation complex catalytic subunit PAN2 of Debaryomyces hansenii (strain ATCC 36239 / CBS 767 / BCRC 21394 / JCM 1990 / NBRC 0083 / IGC 2968) (Yeast).